A 164-amino-acid chain; its full sequence is Phosphopantetheine adenylyltransferase (164 aa).

Ser-9 serves as a coordination point for substrate. ATP contacts are provided by residues 9-10 (SF) and His-17. Lys-41, Leu-73, and Lys-87 together coordinate substrate. Residues 88 to 90 (GLR), Glu-98, and 122 to 128 (YSYLSSS) each bind ATP.

Belongs to the bacterial CoaD family. As to quaternary structure, homohexamer. Requires Mg(2+) as cofactor.

Its subcellular location is the cytoplasm. It catalyses the reaction (R)-4'-phosphopantetheine + ATP + H(+) = 3'-dephospho-CoA + diphosphate. The protein operates within cofactor biosynthesis; coenzyme A biosynthesis; CoA from (R)-pantothenate: step 4/5. Functionally, reversibly transfers an adenylyl group from ATP to 4'-phosphopantetheine, yielding dephospho-CoA (dPCoA) and pyrophosphate. The polypeptide is Phosphopantetheine adenylyltransferase (Rhodococcus erythropolis (strain PR4 / NBRC 100887)).